Consider the following 314-residue polypeptide: 3'-5' exoribonuclease YhaM (314 aa).

In terms of domain architecture, HD spans 163–279 (HVVSMLDLAK…LHYIDNLDAK (117 aa)).

This sequence belongs to the YhaM family.

Functionally, shows a 3'-5' exoribonuclease activity. This is 3'-5' exoribonuclease YhaM from Bacillus cereus (strain G9842).